The chain runs to 238 residues: Tetrahydromethanopterin S-methyltransferase subunit A 1 (238 aa).

Residues 2 to 218 (VEKKSPAEGW…RMFAGMYSGK (217 aa)) are Cytoplasmic-facing. Residue His-84 participates in 5-hydroxybenzimidazolylcob(I)amide binding. Residues 219–237 (VQGIMIGLAFTLTLGILLL) form a helical membrane-spanning segment. Val-238 is a topological domain (extracellular).

This sequence belongs to the MtrA family. In terms of assembly, the complex is composed of 8 subunits; MtrA, MtrB, MtrC, MtrD, MtrE, MtrF, MtrG and MtrH. It depends on 5-hydroxybenzimidazolylcob(I)amide as a cofactor.

The protein resides in the cell membrane. It carries out the reaction 5-methyl-5,6,7,8-tetrahydromethanopterin + coenzyme M + 2 Na(+)(in) = 5,6,7,8-tetrahydromethanopterin + methyl-coenzyme M + 2 Na(+)(out). It functions in the pathway one-carbon metabolism; methanogenesis from CO(2); methyl-coenzyme M from 5,10-methylene-5,6,7,8-tetrahydromethanopterin: step 2/2. Part of a complex that catalyzes the formation of methyl-coenzyme M and tetrahydromethanopterin from coenzyme M and methyl-tetrahydromethanopterin. This is an energy-conserving, sodium-ion translocating step. The polypeptide is Tetrahydromethanopterin S-methyltransferase subunit A 1 (Methanothermobacter marburgensis (strain ATCC BAA-927 / DSM 2133 / JCM 14651 / NBRC 100331 / OCM 82 / Marburg) (Methanobacterium thermoautotrophicum)).